A 502-amino-acid chain; its full sequence is ATP synthase subunit alpha (502 aa).

Residue 169–176 participates in ATP binding; it reads GDKQTGKT.

This sequence belongs to the ATPase alpha/beta chains family. As to quaternary structure, F-type ATPases have 2 components, CF(1) - the catalytic core - and CF(0) - the membrane proton channel. CF(1) has five subunits: alpha(3), beta(3), gamma(1), delta(1), epsilon(1). CF(0) has three main subunits: a(1), b(2) and c(9-12). The alpha and beta chains form an alternating ring which encloses part of the gamma chain. CF(1) is attached to CF(0) by a central stalk formed by the gamma and epsilon chains, while a peripheral stalk is formed by the delta and b chains.

The protein resides in the cell membrane. It carries out the reaction ATP + H2O + 4 H(+)(in) = ADP + phosphate + 5 H(+)(out). Functionally, produces ATP from ADP in the presence of a proton gradient across the membrane. The alpha chain is a regulatory subunit. This chain is ATP synthase subunit alpha, found in Lachnoclostridium phytofermentans (strain ATCC 700394 / DSM 18823 / ISDg) (Clostridium phytofermentans).